We begin with the raw amino-acid sequence, 314 residues long: MSGDTCLTTTLCPAVGPKPKTCSFKVGSLGNKYVRLNVGGSLYYTTVQVLTRHDTMLKAMFSGRMEVLTDKEGWILIDRCGKHFGTILNYLRDDTIALPKHRQEIKELMAEAKYYLIQGLVDMCQAALQDKKDLYEPVCNIPIITSPKEEERLIESSMKPVVKLLYNRSNNKYSYTSNSDDNLLKNIELFDKLSLRFNGRVLFIKDVIGDEICCWSFYGQGRKLAEVCCTSIVYATEKKQTKVEFPEARIYEETLNVLLYETPRVPDNSLLEATSRSRSQASHSEDDDGFELRDRVRRIHVKRYSTYDDRQLGH.

The BTB domain maps to 32-100 (KYVRLNVGGS…LRDDTIALPK (69 aa)).

Belongs to the BACURD family. As to quaternary structure, component of the BCR(TNFAIP1) E3 ubiquitin ligase complex, at least composed of CUL3, TNFAIP1/BACURD2 and RBX1.

It localises to the cytoplasm. Its subcellular location is the nucleus. The protein resides in the endosome. The protein operates within protein modification; protein ubiquitination. Functionally, substrate-specific adapter of a BCR (BTB-CUL3-RBX1) E3 ubiquitin-protein ligase complex involved in regulation of cytoskeleton structure. The BCR(TNFAIP1) E3 ubiquitin ligase complex mediates the ubiquitination of target proteins, leading to their degradation by the proteasome. The protein is BTB/POZ domain-containing adapter for CUL3-mediated RhoA degradation protein 2 (TNFAIP1) of Gallus gallus (Chicken).